We begin with the raw amino-acid sequence, 345 residues long: Phosphate acyltransferase (345 aa).

This sequence belongs to the PlsX family. In terms of assembly, homodimer. Probably interacts with PlsY.

The protein resides in the cytoplasm. The enzyme catalyses a fatty acyl-[ACP] + phosphate = an acyl phosphate + holo-[ACP]. It functions in the pathway lipid metabolism; phospholipid metabolism. Catalyzes the reversible formation of acyl-phosphate (acyl-PO(4)) from acyl-[acyl-carrier-protein] (acyl-ACP). This enzyme utilizes acyl-ACP as fatty acyl donor, but not acyl-CoA. This chain is Phosphate acyltransferase, found in Wolbachia sp. subsp. Brugia malayi (strain TRS).